The following is a 349-amino-acid chain: Serine/threonine-protein kinase SRK2A (349 aa).

The Protein kinase domain occupies 12–268 (YELVKDIGSG…IQEIKNHEWF (257 aa)). Residues 18 to 26 (IGSGNFGVA) and Lys-41 contribute to the ATP site. The Proton acceptor role is filled by Asp-131. Positions 151-177 (DFGYSKSSLLHSQPKSTVGTPAYIAPE) are activation loop.

Belongs to the protein kinase superfamily. Ser/Thr protein kinase family.

The enzyme catalyses L-seryl-[protein] + ATP = O-phospho-L-seryl-[protein] + ADP + H(+). It carries out the reaction L-threonyl-[protein] + ATP = O-phospho-L-threonyl-[protein] + ADP + H(+). Its activity is regulated as follows. Activated by osmotic stress and by abscisic acid (ABA). Activation by NaCl is dependent on ABA. Functionally, involved in early responses to osmotic stress. This chain is Serine/threonine-protein kinase SRK2A, found in Physcomitrium patens (Spreading-leaved earth moss).